The primary structure comprises 247 residues: MDYQTFEKVNKFINVEAYIFFLTQELKQQYKLSLKELLILAYFYYKNEHSISLKEIIGDILYKQSDVVKNIKSLSKKGFINKSRNEADERRIFVSVTPIQRKKIACVINELDKIIKGFNKERDYIKYQWAPKYSKEFFILFMNIMYSKDFLKYRFNLTFLDLSILYVISSRKNEILNLKDLFESIRFMYPQIVRSVNRLNNKGMLIKERSLADERIVLIKINKIQYNTIKSIFTDTSKILKPRKFFF.

DNA-binding regions (H-T-H motif) lie at residues 53–76 and 178–201; these read LKEI…SLSK and LKDL…RLNN.

This sequence belongs to the SarA family.

The protein resides in the cytoplasm. Functionally, positive regulator of RNAII and RNAIII in a cell density-dependent manner. It can contribute to the expression of virulence genes controlled by agr. May also regulate target genes via an agr-independent pathway. This is HTH-type transcriptional regulator SarU (sarU) from Staphylococcus aureus (strain NCTC 8325 / PS 47).